Here is a 559-residue protein sequence, read N- to C-terminus: Polypeptide N-acetylgalactosaminyltransferase 1 (559 aa).

Over Met-1–Lys-8 the chain is Cytoplasmic. A helical; Signal-anchor for type II membrane protein membrane pass occupies residues Val-9–Phe-28. The Lumenal segment spans residues Ser-29–Phe-559. The segment at Gly-45 to Val-66 is disordered. N-linked (GlcNAc...) asparagine glycosylation occurs at Asn-95. 5 cysteine pairs are disulfide-bonded: Cys-106–Cys-339, Cys-330–Cys-408, Cys-442–Cys-459, Cys-482–Cys-497, and Cys-523–Cys-540. The catalytic subdomain A stretch occupies residues Leu-115–Arg-225. Positions 156 and 186 each coordinate substrate. Residues Asp-209 and His-211 each coordinate Mn(2+). The catalytic subdomain B stretch occupies residues Pro-285–Arg-347. Substrate is bound at residue Trp-316. Residue His-344 participates in Mn(2+) binding. Residues Arg-347 and Tyr-352 each coordinate substrate. One can recognise a Ricin B-type lectin domain in the interval Ser-429–Arg-551. Asn-552 is a glycosylation site (N-linked (GlcNAc...) asparagine).

The protein belongs to the glycosyltransferase 2 family. GalNAc-T subfamily. Mn(2+) serves as cofactor.

Its subcellular location is the golgi apparatus. The protein localises to the golgi stack membrane. The protein resides in the secreted. It catalyses the reaction L-seryl-[protein] + UDP-N-acetyl-alpha-D-galactosamine = a 3-O-[N-acetyl-alpha-D-galactosaminyl]-L-seryl-[protein] + UDP + H(+). The enzyme catalyses L-threonyl-[protein] + UDP-N-acetyl-alpha-D-galactosamine = a 3-O-[N-acetyl-alpha-D-galactosaminyl]-L-threonyl-[protein] + UDP + H(+). Its pathway is protein modification; protein glycosylation. In terms of biological role, catalyzes the initial reaction in O-linked oligosaccharide biosynthesis, the transfer of an N-acetyl-D-galactosamine residue to a serine or threonine residue on the protein receptor. Has a broad spectrum of substrates such as apomucin-, MUC5AC-, MUC1- and MUC2-derived peptides. This chain is Polypeptide N-acetylgalactosaminyltransferase 1, found in Sus scrofa (Pig).